The primary structure comprises 156 residues: Protein E6 (156 aa).

Zinc fingers lie at residues 42–78 and 115–151; these read CHYC…CSQC and CVRC…CVRC.

It belongs to the papillomaviridae E6 protein family. As to quaternary structure, forms homodimers. Interacts with ubiquitin-protein ligase UBE3A/E6-AP; this interaction stimulates UBE3A ubiquitin activity. Interacts with host BAK1.

The protein localises to the host cytoplasm. The protein resides in the host nucleus. In terms of biological role, plays a major role in the induction and maintenance of cellular transformation. E6 associates with host UBE3A/E6-AP ubiquitin-protein ligase and modulates its activity. Protects host keratinocytes from apoptosis by mediating the degradation of host BAK1. May also inhibit host immune response. The chain is Protein E6 from Homo sapiens (Human).